We begin with the raw amino-acid sequence, 336 residues long: UDP-galactose transporter 1 (336 aa).

Helical transmembrane passes span 11-31 (LAIL…KWIF), 38-58 (FPLS…YIVI), 83-103 (FVFC…PVSF), 131-151 (IWAS…TELS), 154-174 (MFGF…TILA), 193-213 (APFA…SGIL), 227-247 (IIIL…FYVI), 254-274 (TFNV…WLIF), and 278-298 (ISYM…FYGY).

Belongs to the TPT transporter family. TPT (TC 2.A.7.9) subfamily.

Its subcellular location is the membrane. Its function is as follows. Nucleotide sugar transporter that specifically transports UDP-galactose. The protein is UDP-galactose transporter 1 of Arabidopsis thaliana (Mouse-ear cress).